The sequence spans 644 residues: Protein lin-9 (644 aa).

A disordered region spans residues 1 to 77 (MSSAVRSPRK…GRDSPSVNSL (77 aa)). The segment covering 50-62 (SIKRTGSPKKSPA) has biased composition (basic residues).

This sequence belongs to the lin-9 family. As to quaternary structure, component of the DRM complex, at least composed of lin-9, lin-35, lin-37, lin-52, lin-53, lin-54- dpl-1 and efl-1. Interacts with zft-11; the interaction is required to suppress the activation of non-neuronal genes in neurons.

The protein localises to the nucleus. In terms of biological role, synthetic multivulva class B (synMuvB) protein. SynMuvB proteins are required to repress the induction of vulval development by Ras signaling and probably act by forming the multiprotein DRM complex that represses transcription. Required for the development of sheath cells in the hermaphrodite gonad and for the development of the male spicule, rays and gonad. In association with the zinc finger protein ztf-11, negatively regulates the expression of non-neuronal genes during neurogenesis. The polypeptide is Protein lin-9 (Caenorhabditis elegans).